The sequence spans 307 residues: Putative F-box protein PP2-B6 (307 aa).

The 47-residue stretch at 42–88 (HSPFDDLPEDCISNIISFTSPRDVCVSASVSKSFAHAVQCDSIWEKF) folds into the F-box domain.

This Arabidopsis thaliana (Mouse-ear cress) protein is Putative F-box protein PP2-B6 (PP2B6).